A 297-amino-acid chain; its full sequence is Probable deoxyhypusine synthase (297 aa).

The Nucleophile role is filled by Lys-265.

Belongs to the deoxyhypusine synthase family. NAD(+) serves as cofactor.

It carries out the reaction [eIF5A protein]-L-lysine + spermidine = [eIF5A protein]-deoxyhypusine + propane-1,3-diamine. The protein operates within protein modification; eIF5A hypusination. In terms of biological role, catalyzes the NAD-dependent oxidative cleavage of spermidine and the subsequent transfer of the butylamine moiety of spermidine to the epsilon-amino group of a specific lysine residue of the eIF-5A precursor protein to form the intermediate deoxyhypusine residue. This Methanopyrus kandleri (strain AV19 / DSM 6324 / JCM 9639 / NBRC 100938) protein is Probable deoxyhypusine synthase.